Reading from the N-terminus, the 322-residue chain is Anthranilate phosphoribosyltransferase (322 aa).

5-phospho-alpha-D-ribose 1-diphosphate contacts are provided by residues G71, 74-75, T79, 81-84, 99-107, and A111; these read GD, NVST, and KFGNRSASG. Position 71 (G71) interacts with anthranilate. Mg(2+) is bound at residue S83. N102 serves as a coordination point for anthranilate. R157 contacts anthranilate. Residues D215 and E216 each coordinate Mg(2+).

Belongs to the anthranilate phosphoribosyltransferase family. As to quaternary structure, homodimer. It depends on Mg(2+) as a cofactor.

It catalyses the reaction N-(5-phospho-beta-D-ribosyl)anthranilate + diphosphate = 5-phospho-alpha-D-ribose 1-diphosphate + anthranilate. Its pathway is amino-acid biosynthesis; L-tryptophan biosynthesis; L-tryptophan from chorismate: step 2/5. Its function is as follows. Catalyzes the transfer of the phosphoribosyl group of 5-phosphorylribose-1-pyrophosphate (PRPP) to anthranilate to yield N-(5'-phosphoribosyl)-anthranilate (PRA). The chain is Anthranilate phosphoribosyltransferase from Thermoplasma acidophilum (strain ATCC 25905 / DSM 1728 / JCM 9062 / NBRC 15155 / AMRC-C165).